A 437-amino-acid chain; its full sequence is 3-ketoacyl-CoA thiolase (437 aa).

Cys99 serves as the catalytic Acyl-thioester intermediate. Residues His392 and Cys422 each act as proton acceptor in the active site.

It belongs to the thiolase-like superfamily. Thiolase family. Heterotetramer of two alpha chains (FadJ) and two beta chains (FadI).

It localises to the cytoplasm. It carries out the reaction an acyl-CoA + acetyl-CoA = a 3-oxoacyl-CoA + CoA. It participates in lipid metabolism; fatty acid beta-oxidation. Functionally, catalyzes the final step of fatty acid oxidation in which acetyl-CoA is released and the CoA ester of a fatty acid two carbons shorter is formed. The sequence is that of 3-ketoacyl-CoA thiolase from Erwinia tasmaniensis (strain DSM 17950 / CFBP 7177 / CIP 109463 / NCPPB 4357 / Et1/99).